We begin with the raw amino-acid sequence, 380 residues long: F-box protein At4g18380 (380 aa).

In terms of domain architecture, F-box spans 22–70 (IDHFDNLPDSILLLIFNNIGDVKALGRCSVVSKRFHSLIPQVENVFVRV).

The protein is F-box protein At4g18380 of Arabidopsis thaliana (Mouse-ear cress).